The following is a 325-amino-acid chain: Glutarate 2-hydroxylase (325 aa).

Fe cation is bound by residues H160, D162, and H292.

The protein belongs to the glutarate hydroxylase family. As to quaternary structure, homotetramer. Fe(2+) is required as a cofactor.

It carries out the reaction glutarate + 2-oxoglutarate + O2 = (S)-2-hydroxyglutarate + succinate + CO2. The protein operates within amino-acid degradation. In terms of biological role, acts as an alpha-ketoglutarate-dependent dioxygenase catalyzing hydroxylation of glutarate (GA) to L-2-hydroxyglutarate (L2HG). Functions in a L-lysine degradation pathway that proceeds via cadaverine, glutarate and L-2-hydroxyglutarate. The chain is Glutarate 2-hydroxylase from Escherichia coli O6:K15:H31 (strain 536 / UPEC).